We begin with the raw amino-acid sequence, 560 residues long: Probable methionine--tRNA ligase, cytoplasmic (560 aa).

Positions 16-26 (PYVNNQPHLGN) match the 'HIGH' region motif. The 'KMSKS' region signature appears at 347 to 351 (KFSKS). Lysine 350 is a binding site for ATP.

The protein belongs to the class-I aminoacyl-tRNA synthetase family.

It is found in the cytoplasm. The catalysed reaction is tRNA(Met) + L-methionine + ATP = L-methionyl-tRNA(Met) + AMP + diphosphate. The sequence is that of Probable methionine--tRNA ligase, cytoplasmic from Vairimorpha ceranae (strain BRL01) (Microsporidian parasite).